The sequence spans 462 residues: Chromosomal replication initiator protein DnaA (462 aa).

The domain I, interacts with DnaA modulators stretch occupies residues 1–84 (MAVSLWQQCI…RFDIGSRPSA (84 aa)). Positions 84–125 (ARTVQPAPAAPRPTTGHTQTKARVGTAFNIQAEPMANANHRS) are domain II. Residues 126–342 (NINPTYQFDN…GALNRVIANA (217 aa)) are domain III, AAA+ region. Positions 170, 172, 173, and 174 each coordinate ATP. A domain IV, binds dsDNA region spans residues 343–462 (NFTGRPITID…YANLIRTLSS (120 aa)).

It belongs to the DnaA family. In terms of assembly, oligomerizes as a right-handed, spiral filament on DNA at oriC.

It is found in the cytoplasm. Functionally, plays an essential role in the initiation and regulation of chromosomal replication. ATP-DnaA binds to the origin of replication (oriC) to initiate formation of the DNA replication initiation complex once per cell cycle. Binds the DnaA box (a 9 base pair repeat at the origin) and separates the double-stranded (ds)DNA. Forms a right-handed helical filament on oriC DNA; dsDNA binds to the exterior of the filament while single-stranded (ss)DNA is stabiized in the filament's interior. The ATP-DnaA-oriC complex binds and stabilizes one strand of the AT-rich DNA unwinding element (DUE), permitting loading of DNA polymerase. After initiation quickly degrades to an ADP-DnaA complex that is not apt for DNA replication. Binds acidic phospholipids. The polypeptide is Chromosomal replication initiator protein DnaA (Shewanella denitrificans (strain OS217 / ATCC BAA-1090 / DSM 15013)).